Consider the following 124-residue polypeptide: Large ribosomal subunit protein bL12 (124 aa).

The protein belongs to the bacterial ribosomal protein bL12 family. In terms of assembly, homodimer. Part of the ribosomal stalk of the 50S ribosomal subunit. Forms a multimeric L10(L12)X complex, where L10 forms an elongated spine to which 2 to 4 L12 dimers bind in a sequential fashion. Binds GTP-bound translation factors.

Forms part of the ribosomal stalk which helps the ribosome interact with GTP-bound translation factors. Is thus essential for accurate translation. The sequence is that of Large ribosomal subunit protein bL12 from Vesicomyosocius okutanii subsp. Calyptogena okutanii (strain HA).